A 59-amino-acid polypeptide reads, in one-letter code: uncharacterized protein (59 aa).

2 stretches are compositionally biased toward basic and acidic residues: residues 1-23 (MAEH…DAGR) and 36-45 (DPQRASEAGK). Positions 1 to 59 (MAEHRGGSGNFAEDREKASDAGRKGGQHSGGNFKNDPQRASEAGKKGGQQSGGNKSGKS) are disordered. Residues 46 to 59 (KGGQQSGGNKSGKS) are compositionally biased toward gly residues.

It belongs to the con-10 family.

This is an uncharacterized protein from Escherichia coli (strain K12).